The following is a 105-amino-acid chain: UPF0235 protein RAF_ORF1191 (105 aa).

It belongs to the UPF0235 family.

The sequence is that of UPF0235 protein RAF_ORF1191 from Rickettsia africae (strain ESF-5).